The sequence spans 334 residues: Glycerol-3-phosphate dehydrogenase [NAD(P)+] (334 aa).

NADPH-binding residues include Ser13, Phe14, and Lys108. The sn-glycerol 3-phosphate site is built by Lys108, Gly137, and Thr139. Ala141 is an NADPH binding site. 5 residues coordinate sn-glycerol 3-phosphate: Lys193, Asp246, Ser256, Arg257, and Asn258. The active-site Proton acceptor is Lys193. Arg257 is an NADPH binding site. The NADPH site is built by Val281 and Glu283.

Belongs to the NAD-dependent glycerol-3-phosphate dehydrogenase family.

The protein resides in the cytoplasm. It carries out the reaction sn-glycerol 3-phosphate + NAD(+) = dihydroxyacetone phosphate + NADH + H(+). The enzyme catalyses sn-glycerol 3-phosphate + NADP(+) = dihydroxyacetone phosphate + NADPH + H(+). The protein operates within membrane lipid metabolism; glycerophospholipid metabolism. In terms of biological role, catalyzes the reduction of the glycolytic intermediate dihydroxyacetone phosphate (DHAP) to sn-glycerol 3-phosphate (G3P), the key precursor for phospholipid synthesis. In Bartonella tribocorum (strain CIP 105476 / IBS 506), this protein is Glycerol-3-phosphate dehydrogenase [NAD(P)+].